The primary structure comprises 477 residues: Probable malate:quinone oxidoreductase (477 aa).

This sequence belongs to the MQO family. Requires FAD as cofactor.

It catalyses the reaction (S)-malate + a quinone = a quinol + oxaloacetate. Its pathway is carbohydrate metabolism; tricarboxylic acid cycle; oxaloacetate from (S)-malate (quinone route): step 1/1. This is Probable malate:quinone oxidoreductase from Synechococcus sp. (strain RCC307).